The primary structure comprises 2592 residues: 6-hydroxymellein synthase cdmE (2592 aa).

Residues 1–11 show a composition bias toward basic and acidic residues; the sequence is MVLHPSDRRFP. Positions 1-25 are disordered; that stretch reads MVLHPSDRRFPETNGVGGHSKDSSA. The region spanning 32 to 456 is the Ketosynthase family 3 (KS3) domain; sequence LEPLAIVGFA…GTNAHVVLES (425 aa). Active-site for beta-ketoacyl synthase activity residues include Cys205, His340, and His379. The segment at 589–910 is malonyl-CoA:ACP transacylase (MAT) domain; it reads VFTGQGAQWP…RYSHTITRKK (322 aa). The N-terminal hotdog fold stretch occupies residues 978–1113; the sequence is HELLGSPDPD…GFIESKCESD (136 aa). Residues 978 to 1291 form a dehydratase (DH) domain region; it reads HELLGSPDPD…IRGTELCLLS (314 aa). The PKS/mFAS DH domain occupies 978-1296; the sequence is HELLGSPDPD…LCLLSAGRGD (319 aa). The tract at residues 1140 to 1296 is C-terminal hotdog fold; the sequence is TQIGSISAFY…LCLLSAGRGD (157 aa). S-adenosyl-L-methionine-binding residues include Ile1462 and Glu1484. Residues 1483–1591 are methyltransferase (CMeT) domain; it reads LEIGTGFGSV…HSLLKPGGKL (109 aa). The segment at 1887–2199 is enoyl reductase (ER) domain; the sequence is GLLVWSDDEA…NDSNMDTAVI (313 aa). Residues 2223–2398 are ketoreductase (KR) domain; that stretch reads ATYVIAGGLG…IPGMSVNLGN (176 aa). The Carrier domain occupies 2509–2586; the sequence is VAASHVTEAI…GLSEKIARQS (78 aa). Ser2546 carries the O-(pantetheine 4'-phosphoryl)serine modification.

The enzyme catalyses 5 malonyl-CoA + AH2 + 5 H(+) = 6-hydroxymellein + A + 5 CO2 + 5 CoA + H2O. It participates in secondary metabolite biosynthesis; terpenoid biosynthesis. Highly reducing polyketide synthase; part of the gene cluster that mediates the biosynthesis of chrodrimanin B, a meroterpenoid that acts as a potent blocker of insect GABA-gated chloride channels. The first step of the pathway is the biosynthesis of 6-hydroxymellein by the polyketide synthase cdmE. The prenyltransferase cdmH acts as a 6-hydroxymellein 5-farnesyltransferase and produces the hydrophobic metabolite verruculide C. The FAD-dependent monooxygenase cdmI further converts verruculide C into verruculide B. The terpene cyclase cdmG then produced the pentacyclic molecule 3-hydroxypentacecilide A, the backbone structure of chrodrimanin B, via folding the farnesyl moiety of the substrate into the chair-boat conformation. The short-chain dehydrogenase/reductase cdmF functions as the 3-OH dehydrogenase that oxidizes the C-3 hydroxyl group of 3-hydroxypentacecilide A and produces chrodrimanin C, the dehydrogenated product of 3-hydroxypentacecilide A. The cytochrome P450 monooxygenase cdmJ then accepts both 3-hydroxypentacecilide A and chrodrimanin C and functions as a C-7-beta-hydroxylase to produce respectively chrodrimanin H and chrodrimanin F. The dioxygenase cdmA accepts chrodrimanin H to afford chrodrimanin E, which is further transformed to chrodrimanin A by the dioxygenase cdmD. CdmA can also accept chrodrimanin C as substrate to convert it into verruculide A, which is further converted into chrodrimanin T by cdmD. The last step of the biosynthesis is proposed to be performed by the acetyltransferase cdmC which acetylates chrodrimanin A to yield chrodrimanin B. The pathway may also lead to the production of additional shunt products, including chrodrimanins T and U. This chain is 6-hydroxymellein synthase cdmE, found in Talaromyces verruculosus (Penicillium verruculosum).